Here is a 476-residue protein sequence, read N- to C-terminus: Glutamyl-tRNA(Gln) amidotransferase subunit A (476 aa).

Residues K77 and S152 each act as charge relay system in the active site. S176 functions as the Acyl-ester intermediate in the catalytic mechanism.

This sequence belongs to the amidase family. GatA subfamily. In terms of assembly, heterotrimer of A, B and C subunits.

It catalyses the reaction L-glutamyl-tRNA(Gln) + L-glutamine + ATP + H2O = L-glutaminyl-tRNA(Gln) + L-glutamate + ADP + phosphate + H(+). Its function is as follows. Allows the formation of correctly charged Gln-tRNA(Gln) through the transamidation of misacylated Glu-tRNA(Gln) in organisms which lack glutaminyl-tRNA synthetase. The reaction takes place in the presence of glutamine and ATP through an activated gamma-phospho-Glu-tRNA(Gln). The sequence is that of Glutamyl-tRNA(Gln) amidotransferase subunit A from Acidobacterium capsulatum (strain ATCC 51196 / DSM 11244 / BCRC 80197 / JCM 7670 / NBRC 15755 / NCIMB 13165 / 161).